A 316-amino-acid chain; its full sequence is Small kinetochore-associated protein (316 aa).

A Phosphoserine modification is found at serine 128. The segment at 159–316 is interaction with SPAG5; sequence VRKGYKPLSK…LKEMEQLLEM (158 aa). 2 coiled-coil regions span residues 166–216 and 248–316; these read LSKQ…FRDN and SMLL…LLEM.

Part of an astrin (SPAG5)-kinastrin (SKAP) complex containing KNSTRN, SPAG5, PLK1, DYNLL1 and SGO2. Interacts with SPAG5. Directly binds to microtubules, although at relatively low affinity. Interacts with CENPE; this interaction greatly favors microtubule-binding. Interacts with DSN1/MIS13; leading to localization to kinetochores. Interacts with MAPRE1/EB1; leading to localization to the microtubule plus ends. Interacts with PRPF19. Interacts with DYNLL1. Interacts with MAP4. Widely expressed, including in skin.

It localises to the nucleus. The protein localises to the chromosome. The protein resides in the centromere. It is found in the kinetochore. Its subcellular location is the cytoplasm. It localises to the cytoskeleton. The protein localises to the spindle pole. The protein resides in the microtubule organizing center. Essential component of the mitotic spindle required for faithful chromosome segregation and progression into anaphase. Promotes the metaphase-to-anaphase transition and is required for chromosome alignment, normal timing of sister chromatid segregation, and maintenance of spindle pole architecture. The astrin (SPAG5)-kinastrin (SKAP) complex promotes stable microtubule-kinetochore attachments. Required for kinetochore oscillations and dynamics of microtubule plus-ends during live cell mitosis, possibly by forming a link between spindle microtubule plus-ends and mitotic chromosomes to achieve faithful cell division. May be involved in UV-induced apoptosis via its interaction with PRPF19; however, these results need additional evidences. The sequence is that of Small kinetochore-associated protein from Homo sapiens (Human).